We begin with the raw amino-acid sequence, 698 residues long: Elongation factor G (698 aa).

Residues 8–284 enclose the tr-type G domain; it reads ANVRNIGIMA…AVVDFLPSPL (277 aa). GTP contacts are provided by residues 17–24, 81–85, and 135–138; these read AHIDAGKT, DTPGH, and NKLD. The segment at 289-309 is disordered; the sequence is IEGTGTDGETPLQRKPSTSEP.

It belongs to the TRAFAC class translation factor GTPase superfamily. Classic translation factor GTPase family. EF-G/EF-2 subfamily.

The protein localises to the cytoplasm. Catalyzes the GTP-dependent ribosomal translocation step during translation elongation. During this step, the ribosome changes from the pre-translocational (PRE) to the post-translocational (POST) state as the newly formed A-site-bound peptidyl-tRNA and P-site-bound deacylated tRNA move to the P and E sites, respectively. Catalyzes the coordinated movement of the two tRNA molecules, the mRNA and conformational changes in the ribosome. This Salinispora arenicola (strain CNS-205) protein is Elongation factor G.